The following is a 344-amino-acid chain: Ribosomal RNA large subunit methyltransferase Cfr (344 aa).

Glu-90 acts as the Proton acceptor in catalysis. The 234-residue stretch at 97–330 (KQGWESFCIS…ATVRTQFGSE (234 aa)) folds into the Radical SAM core domain. A disulfide bridge connects residues Cys-104 and Cys-335. Residues Cys-111, Cys-115, and Cys-118 each coordinate [4Fe-4S] cluster. S-adenosyl-L-methionine-binding positions include 157 to 158 (GE), Ser-188, 211 to 213 (SLH), and Asn-292. The S-methylcysteine intermediate role is filled by Cys-335.

It belongs to the radical SAM superfamily. RlmN family. Cfr subfamily. Requires [4Fe-4S] cluster as cofactor.

It localises to the cytoplasm. The catalysed reaction is adenosine(2503) in 23S rRNA + 2 reduced [2Fe-2S]-[ferredoxin] + 2 S-adenosyl-L-methionine = 8-methyladenosine(2503) in 23S rRNA + 5'-deoxyadenosine + L-methionine + 2 oxidized [2Fe-2S]-[ferredoxin] + S-adenosyl-L-homocysteine. In terms of biological role, specifically methylates position 8 of adenine 2503 in 23S rRNA. Confers resistance to some classes of antibiotics. The sequence is that of Ribosomal RNA large subunit methyltransferase Cfr from Clostridium botulinum (strain Langeland / NCTC 10281 / Type F).